A 377-amino-acid polypeptide reads, in one-letter code: MIINHNLMANNALRNMNVNSNNASKAMEKLSSGLRINRAGDDAAGLAISEKMRGQINGLNQASSNAQDSISLIQTAEGALNETHSILQRMRTLAVQSSNDTNTTTDRSAIQDEVNQLTDEIDRIANTTEFNTQKLLDGSKVGLVDAKDADASVQLNTSANISLASNFSTTSATGIADSFTVTITRTHGTAGATFASTDYDVALVGGTELIEHSSSSLTYDTKAINLVGMIKCFSIRTNDTIRKVSHVRTVKALSMQIGAIVTNMLIGINSMKATDIGVRNTSGKALDISTASKATGAITQINNAIETVSTQRSKLGAYQNRLEHTINNLGTSSENLTSAESRIRDVDMASEMSEYSKNNILSQTAQAMLAQANQQTQ.

The protein belongs to the bacterial flagellin family.

It is found in the secreted. The protein localises to the bacterial flagellum. In terms of biological role, flagellin is the subunit protein which polymerizes to form the filaments of bacterial flagella. The chain is Flagellin (fla) from Clostridium tyrobutyricum.